The sequence spans 592 residues: Arginine--tRNA ligase (592 aa).

Positions 134-144 match the 'HIGH' region motif; the sequence is ANPTGPLHVGH.

It belongs to the class-I aminoacyl-tRNA synthetase family. Monomer.

Its subcellular location is the cytoplasm. The catalysed reaction is tRNA(Arg) + L-arginine + ATP = L-arginyl-tRNA(Arg) + AMP + diphosphate. The polypeptide is Arginine--tRNA ligase (Coxiella burnetii (strain RSA 493 / Nine Mile phase I)).